The following is a 256-amino-acid chain: Hypodermin-B (256 aa).

The N-terminal stretch at 1–22 is a signal peptide; it reads MLKFVILVCSVACVFGAVVPGG. A propeptide spans 23–30 (activation peptide); it reads MLPQLDGR. Positions 31 to 254 constitute a Peptidase S1 domain; that stretch reads IVGGFEADIE…VRSWITENAK (224 aa). The cysteines at positions 56 and 72 are disulfide-linked. Residues histidine 71 and aspartate 116 each act as charge relay system in the active site. Intrachain disulfides connect cysteine 180–cysteine 197 and cysteine 206–cysteine 230. Serine 210 acts as the Charge relay system in catalysis.

The protein belongs to the peptidase S1 family.

It is found in the secreted. Protease that shows preferential cleavage after Arg and Lys residues. This Hypoderma lineatum (Early cattle grub) protein is Hypodermin-B.